Consider the following 616-residue polypeptide: Chaperone protein HscA (616 aa).

The protein belongs to the heat shock protein 70 family.

In terms of biological role, chaperone involved in the maturation of iron-sulfur cluster-containing proteins. Has a low intrinsic ATPase activity which is markedly stimulated by HscB. Involved in the maturation of IscU. The polypeptide is Chaperone protein HscA (Salmonella newport (strain SL254)).